A 197-amino-acid chain; its full sequence is Rac-like GTP-binding protein ARAC1 (197 aa).

Position 13–20 (13–20 (GDGAVGKT)) interacts with GTP. The Effector region motif lies at 35–43 (YVPTVFDNF). GTP-binding positions include 60-64 (DTAGQ) and 118-121 (TKLD). C194 bears the Cysteine methyl ester mark. Residue C194 is the site of S-geranylgeranyl cysteine attachment. Positions 195–197 (SIL) are cleaved as a propeptide — removed in mature form.

Belongs to the small GTPase superfamily. Rho family. As to quaternary structure, interacts with SPK1. Ubiquitous.

The protein localises to the cytoplasm. Its subcellular location is the membrane. Its function is as follows. Inactive GDP-bound Rho GTPases reside in the cytosol, are found in a complex with Rho GDP-dissociation inhibitors (Rho GDIs), and are released from the GDI protein in order to translocate to membranes upon activation. The sequence is that of Rac-like GTP-binding protein ARAC1 (ARAC1) from Arabidopsis thaliana (Mouse-ear cress).